The primary structure comprises 314 residues: N-myc-interactor (314 aa).

The tract at residues 1-24 is disordered; sequence MDADKDNIKQACDERSAEMDDMRG. Phosphoserine is present on serine 16. A coiled-coil region spans residues 31–65; the sequence is VHEIMSENKELDEEIKKLEAELQSDAREFQIKENV. NID domains follow at residues 104-193 and 202-293; these read GQAL…GEVE and RSAV…EVEV.

Belongs to the NMI family. In terms of assembly, interacts with MYCN and MYC, as well as with other transcription factors with a Zip, HLH or a HLH-Zip motif. Interacts with all STAT proteins except STAT2. Interacts with IRF7, the interaction is direct and leads to the inhibition of IRF7-mediated type I IFN production. Interacts (via coiled-coil domain) with TRIM21 (via the SPRY domain); the interaction leads to 'Lys-63'-linked ubiquitination of NMI. Interacts with IFI35; the interaction is direct and is facilitated by TRIM21. Interacts with TLR4; the interaction is direct and leads to NF-kappa-B activation. Post-translationally, may be ubiquitinated. In terms of tissue distribution, expressed in macrophages.

The protein resides in the cytoplasm. It is found in the nucleus. The protein localises to the secreted. In terms of biological role, acts as a signaling pathway regulator involved in innate immune system response. In response to interleukin 2/IL2 and interferon IFN-gamma/IFNG, interacts with signal transducer and activator of transcription/STAT which activate the transcription of downstream genes involved in a multitude of signals for development and homeostasis. Enhances the recruitment of CBP/p300 coactivators to STAT1 and STAT5, resulting in increased STAT1- and STAT5-dependent transcription. In response to interferon IFN-alpha, associates in a complex with transcriptional regulator IFI35 to regulate immune response; the complex formation prevents proteasome-mediated degradation of IFI35. In complex with IFI35, negatively regulates nuclear factor NF-kappa-B signaling by inhibiting the nuclear translocation, activation and transcription of NF-kappa-B subunit p65/RELA, resulting in the inhibition of endothelial cell proliferation, migration and re-endothelialization of injured arteries. Negatively regulates virus-triggered type I interferon/IFN production by inducing proteosome-dependent degradation of IRF7, a transcriptional regulator of type I IFN, thereby interfering with cellular antiviral responses. Beside its role as an intracellular signaling pathway regulator, also functions extracellularly as damage-associated molecular patterns (DAMPs) to promote inflammation, when actively released by macrophage to the extracellular space during cell injury or pathogen invasion. Macrophage-secreted NMI activates NF-kappa-B signaling in adjacent macrophages through Toll-like receptor 4/TLR4 binding and activation, thereby inducing NF-kappa-B translocation from the cytoplasm into the nucleus which promotes the release of pro-inflammatory cytokines. This is N-myc-interactor from Mus musculus (Mouse).